Consider the following 1071-residue polypeptide: Carbamoyl phosphate synthase large chain (1071 aa).

Positions 1–403 (MPKRTDLKSI…SFQKALRGLE (403 aa)) are carboxyphosphate synthetic domain. In terms of domain architecture, ATP-grasp 1 spans 133 to 328 (KEAMEKIGLS…IAKVAANWAV (196 aa)). Positions 169, 175, 176, 208, 210, 215, 241, 242, 243, 285, and 299 each coordinate ATP. The Mg(2+) site is built by Q285, E299, and N301. Residues Q285, E299, and N301 each contribute to the Mn(2+) site. The tract at residues 404 to 548 (TGLCGFNPAR…YSTYEEECES (145 aa)) is oligomerization domain. Residues 549–930 (RPSDRKKVMI…AYYKAQLGAG (382 aa)) are carbamoyl phosphate synthetic domain. Residues 673-864 (QKVLNDLGLR…LAKVGARCMA (192 aa)) enclose the ATP-grasp 2 domain. Residues R709, F748, L750, E755, G780, I781, H782, S783, Q823, and E835 each contribute to the ATP site. Positions 823, 835, and 837 each coordinate Mg(2+). Q823, E835, and N837 together coordinate Mn(2+). The 141-residue stretch at 931-1071 (ERLNPTGKIF…ELHGRLKNRN (141 aa)) folds into the MGS-like domain. The segment at 931–1071 (ERLNPTGKIF…ELHGRLKNRN (141 aa)) is allosteric domain.

It belongs to the CarB family. As to quaternary structure, composed of two chains; the small (or glutamine) chain promotes the hydrolysis of glutamine to ammonia, which is used by the large (or ammonia) chain to synthesize carbamoyl phosphate. Tetramer of heterodimers (alpha,beta)4. Requires Mg(2+) as cofactor. It depends on Mn(2+) as a cofactor.

The catalysed reaction is hydrogencarbonate + L-glutamine + 2 ATP + H2O = carbamoyl phosphate + L-glutamate + 2 ADP + phosphate + 2 H(+). It carries out the reaction hydrogencarbonate + NH4(+) + 2 ATP = carbamoyl phosphate + 2 ADP + phosphate + 2 H(+). It participates in amino-acid biosynthesis; L-arginine biosynthesis; carbamoyl phosphate from bicarbonate: step 1/1. Its pathway is pyrimidine metabolism; UMP biosynthesis via de novo pathway; (S)-dihydroorotate from bicarbonate: step 1/3. Its function is as follows. Large subunit of the glutamine-dependent carbamoyl phosphate synthetase (CPSase). CPSase catalyzes the formation of carbamoyl phosphate from the ammonia moiety of glutamine, carbonate, and phosphate donated by ATP, constituting the first step of 2 biosynthetic pathways, one leading to arginine and/or urea and the other to pyrimidine nucleotides. The large subunit (synthetase) binds the substrates ammonia (free or transferred from glutamine from the small subunit), hydrogencarbonate and ATP and carries out an ATP-coupled ligase reaction, activating hydrogencarbonate by forming carboxy phosphate which reacts with ammonia to form carbamoyl phosphate. The protein is Carbamoyl phosphate synthase large chain of Neisseria gonorrhoeae.